Here is a 274-residue protein sequence, read N- to C-terminus: 4-diphosphocytidyl-2-C-methyl-D-erythritol kinase (274 aa).

K7 is an active-site residue. 90–100 (PMGGGLGGGSS) serves as a coordination point for ATP. D132 is an active-site residue.

This sequence belongs to the GHMP kinase family. IspE subfamily.

It carries out the reaction 4-CDP-2-C-methyl-D-erythritol + ATP = 4-CDP-2-C-methyl-D-erythritol 2-phosphate + ADP + H(+). It participates in isoprenoid biosynthesis; isopentenyl diphosphate biosynthesis via DXP pathway; isopentenyl diphosphate from 1-deoxy-D-xylulose 5-phosphate: step 3/6. Functionally, catalyzes the phosphorylation of the position 2 hydroxy group of 4-diphosphocytidyl-2C-methyl-D-erythritol. The chain is 4-diphosphocytidyl-2-C-methyl-D-erythritol kinase from Dechloromonas aromatica (strain RCB).